A 1217-amino-acid polypeptide reads, in one-letter code: Myosin-1 (1217 aa).

The segment at 1-26 (MAILKRTNRAKAATAAAPNSTGKSNG) is disordered. Over residues 10–19 (AKAATAAAPN) the composition is skewed to low complexity. ATP-binding positions include 17–24 (APNSTGKS) and 133–140 (GESGAGKT). A Myosin motor domain is found at 40–720 (VGVDDLTLLS…TLFALEDMRD (681 aa)). S361 is subject to Phosphoserine. Y363 bears the Phosphotyrosine mark. The actin-binding stretch occupies residues 409–491 (SIGILDIYGF…PGLFAAMNDA (83 aa)). IQ domains lie at 724 to 744 (DTMATRIQRAWRSYVRRRSEA) and 745 to 770 (AACIQKLWNRNKVNMELERVRNEGTK). S742 carries the phosphoserine modification. Residues 778 to 964 (RRRYSILGSR…TIHVGTGLPP (187 aa)) form the TH1 domain. Residue S782 is modified to Phosphoserine. Residues 961 to 1105 (GLPPTSKSKP…PPPPPPPAEV (145 aa)) are disordered. The segment covering 998 to 1013 (KPVSMPAAKSKPAPMA) has biased composition (low complexity). The segment covering 1015-1025 (PVSTAQQTQNR) has biased composition (polar residues). The segment covering 1045-1075 (TSTTTTIKQATTVSASKPAPSTVTSAASSPS) has biased composition (low complexity). Positions 1076–1088 (NISKPSAPVANNV) are enriched in polar residues. Over residues 1093–1103 (AVPPPPPPPPA) the composition is skewed to pro residues. Residues 1106–1165 (EKKDLYLALYDFAGRSPNEMTIKKDEIIEIVQKEPSGWWLALKNGAEGWVPATYVTEYKG) enclose the SH3 domain. S1211 carries the phosphoserine modification.

It belongs to the TRAFAC class myosin-kinesin ATPase superfamily. Myosin family. As to quaternary structure, interacts with cam2. Interacts (via SH3 domain) with vrp1. Post-translationally, phosphorylation of the TEDS site (Ser-361) is required for the polarization of the actin cytoskeleton. Phosphorylation probably activates the myosin-I ATPase activity.

The protein localises to the cytoplasm. It localises to the cytoskeleton. Its subcellular location is the actin patch. Type-I myosin implicated in the organization of the actin cytoskeleton. Required for proper actin cytoskeleton polarization. At the cell cortex, assembles in patch-like structures together with proteins from the actin-polymerizing machinery and promotes actin assembly. Functions as actin nucleation-promoting factor (NPF) for the Arp2/3 complex. Contributes to proper septation by transporting vesicles containing septal material to the division site and is involved in the formation of sterol-rich membrane domains at the cell division site. Required also for mating. This Schizosaccharomyces pombe (strain 972 / ATCC 24843) (Fission yeast) protein is Myosin-1 (myo1).